We begin with the raw amino-acid sequence, 203 residues long: Small ribosomal subunit protein uS4c (203 aa).

Residues 91 to 159 (MRLDNIIFRL…ISKNIEFYQK (69 aa)) enclose the S4 RNA-binding domain.

This sequence belongs to the universal ribosomal protein uS4 family. Part of the 30S ribosomal subunit. Contacts protein S5. The interaction surface between S4 and S5 is involved in control of translational fidelity.

The protein localises to the plastid. Its subcellular location is the chloroplast. Functionally, one of the primary rRNA binding proteins, it binds directly to 16S rRNA where it nucleates assembly of the body of the 30S subunit. In terms of biological role, with S5 and S12 plays an important role in translational accuracy. The sequence is that of Small ribosomal subunit protein uS4c (rps4) from Lopidium concinnum (Moss).